The primary structure comprises 377 residues: Histidinol-phosphate aminotransferase (377 aa).

Lys-232 bears the N6-(pyridoxal phosphate)lysine mark.

It belongs to the class-II pyridoxal-phosphate-dependent aminotransferase family. Histidinol-phosphate aminotransferase subfamily. In terms of assembly, homodimer. Pyridoxal 5'-phosphate is required as a cofactor.

The catalysed reaction is L-histidinol phosphate + 2-oxoglutarate = 3-(imidazol-4-yl)-2-oxopropyl phosphate + L-glutamate. It functions in the pathway amino-acid biosynthesis; L-histidine biosynthesis; L-histidine from 5-phospho-alpha-D-ribose 1-diphosphate: step 7/9. The chain is Histidinol-phosphate aminotransferase from Mycobacterium sp. (strain JLS).